The following is a 332-amino-acid chain: MNPLIFKENRPFDLIAVGRLCVDLNANETQRPMEETRTFTKYVGGSPANIAIGAARLGLQTGFIGKVSDDQMGRFITGYLKDNKINTDQIRIDCTGAVTGLAFTEIKSPEDCSILMYRDNVADLNLDPTEVSEDYIKQSKALLISGTALAKSPSREAVFLALEYARKHDVVVFFDVDYRPYTWQSEAETAVYYNLAAEKSDVIIGTREEFDMMEKLLNYEQSNDQVTAERWFSHYAKIVVIKHGGDGSIAYTRDGQSHRGGIFKTKVLKTFGAGDSYASAFIYGLIQGLEIPQAMRLGGASASIVISKHSCSDAMPTRAEISAFMETAEELV.

This sequence belongs to the carbohydrate kinase PfkB family.

It carries out the reaction 5-dehydro-2-deoxy-D-gluconate + ATP = 6-phospho-5-dehydro-2-deoxy-D-gluconate + ADP + H(+). The protein operates within polyol metabolism; myo-inositol degradation into acetyl-CoA; acetyl-CoA from myo-inositol: step 5/7. In terms of biological role, catalyzes the phosphorylation of 5-dehydro-2-deoxy-D-gluconate (2-deoxy-5-keto-D-gluconate or DKG) to 6-phospho-5-dehydro-2-deoxy-D-gluconate (DKGP). The protein is 5-dehydro-2-deoxygluconokinase 1 of Bacillus cereus (strain ZK / E33L).